A 128-amino-acid polypeptide reads, in one-letter code: Large ribosomal subunit protein bL20c (128 aa).

It belongs to the bacterial ribosomal protein bL20 family. Component of the chloroplast large ribosomal subunit (LSU). Mature 70S chloroplast ribosomes of higher plants consist of a small (30S) and a large (50S) subunit. The 30S small subunit contains 1 molecule of ribosomal RNA (16S rRNA) and 24 different proteins. The 50S large subunit contains 3 rRNA molecules (23S, 5S and 4.5S rRNA) and 33 different proteins.

Its subcellular location is the plastid. The protein localises to the chloroplast. Its function is as follows. Component of the chloroplast ribosome (chloro-ribosome), a dedicated translation machinery responsible for the synthesis of chloroplast genome-encoded proteins, including proteins of the transcription and translation machinery and components of the photosynthetic apparatus. The sequence is that of Large ribosomal subunit protein bL20c (rpl20) from Spinacia oleracea (Spinach).